The sequence spans 341 residues: Zinc transporter 6, chloroplastic (341 aa).

A helical transmembrane segment spans residues 28 to 48; the sequence is IVAVFAIFLTSVFGVWGPVLL. Residues 49-61 are Cytoplasmic-facing; the sequence is AKYFHGKPLYDKA. Residues 62 to 82 traverse the membrane as a helical segment; that stretch reads ILVIKCFAAGVILSTSLVHVL. The Lumenal portion of the chain corresponds to 83-102; sequence PEAFESLADCQVSSRHPWKD. Residues 103–123 traverse the membrane as a helical segment; it reads FPFAGLVTMIGAITALLVDLT. At 124–179 the chain is on the cytoplasmic side; it reads ASEHMGHGGGGGGDGGMEYMPVGKAVGGLEMKEGKCGADLEIQENSEEEIVKMKQR. A helical transmembrane segment spans residues 180 to 200; sequence LVSQVLEIGIIFHSVIIGVTM. The Lumenal segment spans residues 201–211; sequence GMSQNKCTIRP. Residues 212–232 traverse the membrane as a helical segment; it reads LIAALSFHQIFEGLGLGGCIA. Over 233 to 243 the chain is Cytoplasmic; the sequence is QAGFKAGTVVY. A helical membrane pass occupies residues 244 to 264; sequence MCLMFAVTTPLGIVLGMVIFA. The Lumenal segment spans residues 265–280; sequence ATGYDDQNPNALIMEG. Residues 281-301 traverse the membrane as a helical segment; sequence LLGSFSSGILIYMALVDLIAL. At 302–320 the chain is on the cytoplasmic side; the sequence is DFFHNKMLTTCGESGSRLK. A helical membrane pass occupies residues 321 to 341; that stretch reads KLCFVALVLGSASMSLLALWA.

This sequence belongs to the ZIP transporter (TC 2.A.5) family.

It localises to the plastid. The protein localises to the chloroplast thylakoid membrane. Functionally, may play a role in the transport of zinc in the plastids. In Arabidopsis thaliana (Mouse-ear cress), this protein is Zinc transporter 6, chloroplastic (ZIP6).